Reading from the N-terminus, the 100-residue chain is Putative pterin-4-alpha-carbinolamine dehydratase (100 aa).

The protein belongs to the pterin-4-alpha-carbinolamine dehydratase family.

It catalyses the reaction (4aS,6R)-4a-hydroxy-L-erythro-5,6,7,8-tetrahydrobiopterin = (6R)-L-erythro-6,7-dihydrobiopterin + H2O. This chain is Putative pterin-4-alpha-carbinolamine dehydratase, found in Allorhizobium ampelinum (strain ATCC BAA-846 / DSM 112012 / S4) (Agrobacterium vitis (strain S4)).